Here is a 282-residue protein sequence, read N- to C-terminus: NH(3)-dependent NAD(+) synthetase (282 aa).

51-58 (GISGGVDS) contributes to the ATP binding site. Asp57 provides a ligand contact to Mg(2+). Arg148 contributes to the deamido-NAD(+) binding site. Thr168 contacts ATP. Glu173 serves as a coordination point for Mg(2+). The deamido-NAD(+) site is built by Lys181 and Asp188. Positions 197 and 219 each coordinate ATP. 268-269 (HK) contributes to the deamido-NAD(+) binding site.

It belongs to the NAD synthetase family. Homodimer.

It catalyses the reaction deamido-NAD(+) + NH4(+) + ATP = AMP + diphosphate + NAD(+) + H(+). It participates in cofactor biosynthesis; NAD(+) biosynthesis; NAD(+) from deamido-NAD(+) (ammonia route): step 1/1. Its function is as follows. Catalyzes the ATP-dependent amidation of deamido-NAD to form NAD. Uses ammonia as a nitrogen source. The polypeptide is NH(3)-dependent NAD(+) synthetase (Burkholderia cenocepacia (strain ATCC BAA-245 / DSM 16553 / LMG 16656 / NCTC 13227 / J2315 / CF5610) (Burkholderia cepacia (strain J2315))).